The chain runs to 235 residues: MRLIPAVDLKSGKAVRLYEGDPARETPYGDPVEAALRFQEEGATLLHLVDLDRALGTGENREVVRRVAASLSIPFQLAGGIRSLEALQEALSLGASRAVVGTVAVKDPGLLARMLEAVGPDRLAVALDARGLEVVVSGWQEAVSASALDLLRAWAEMGVRTLLYTDVRRDGTLLGLDREVVARVRAAWPYELIVGGGIASPEDLHLLQALGVDGALVGKALYEGRIRLKEASWRS.

The active-site Proton acceptor is Asp8. Asp128 functions as the Proton donor in the catalytic mechanism.

Belongs to the HisA/HisF family.

It localises to the cytoplasm. It carries out the reaction 1-(5-phospho-beta-D-ribosyl)-5-[(5-phospho-beta-D-ribosylamino)methylideneamino]imidazole-4-carboxamide = 5-[(5-phospho-1-deoxy-D-ribulos-1-ylimino)methylamino]-1-(5-phospho-beta-D-ribosyl)imidazole-4-carboxamide. Its pathway is amino-acid biosynthesis; L-histidine biosynthesis; L-histidine from 5-phospho-alpha-D-ribose 1-diphosphate: step 4/9. This Thermus thermophilus (strain ATCC 27634 / DSM 579 / HB8) protein is 1-(5-phosphoribosyl)-5-[(5-phosphoribosylamino)methylideneamino] imidazole-4-carboxamide isomerase.